Reading from the N-terminus, the 272-residue chain is MRLNNLQLKNNLNLSNKLDKERIPEHIAIIMDGNGRWATKKGLPRSFGHNKGVSVLKEIIKASKNIDCKVLTVYAFSTENWIRPSNEVDFLINLFEKVLKKEISEIHQESIKIKFIGDLSPLPNSLKLLIKSSEALTNNNKKFTLNICVNYGGRQEIVKAAKEIAIKSSSGKIKPSDIDEQLFNSELLTKGSMDPELLIRTSGEKRISNFLLWQLAYSEIYVTDVLWPDFTESEFLKAIIDYQSRNRRFGGIESLSNESFEDSCYSSLSKND.

Asp32 is a catalytic residue. Asp32 serves as a coordination point for Mg(2+). Residues 33-36 (GNGR), Trp37, Arg45, His49, and 77-79 (STE) contribute to the substrate site. The active-site Proton acceptor is Asn80. Substrate contacts are provided by residues Trp81, Arg83, Arg200, and 206-208 (RIS). Glu219 provides a ligand contact to Mg(2+).

The protein belongs to the UPP synthase family. As to quaternary structure, homodimer. Mg(2+) serves as cofactor.

Functionally, catalyzes the condensation of isopentenyl diphosphate (IPP) with allylic pyrophosphates generating different type of terpenoids. This is Isoprenyl transferase from Prochlorococcus marinus subsp. pastoris (strain CCMP1986 / NIES-2087 / MED4).